The following is a 380-amino-acid chain: Queuine tRNA-ribosyltransferase (380 aa).

Asp-96 (proton acceptor) is an active-site residue. Substrate-binding positions include 96–100 (DSGGF), Asp-150, Gln-193, and Gly-220. An RNA binding region spans residues 251–257 (GVGAPDS). The Nucleophile role is filled by Asp-270. The RNA binding; important for wobble base 34 recognition stretch occupies residues 275–279 (TRIAR). Zn(2+) is bound by residues Cys-308, Cys-310, Cys-313, and His-339.

Belongs to the queuine tRNA-ribosyltransferase family. As to quaternary structure, homodimer. Within each dimer, one monomer is responsible for RNA recognition and catalysis, while the other monomer binds to the replacement base PreQ1. Requires Zn(2+) as cofactor.

It carries out the reaction 7-aminomethyl-7-carbaguanine + guanosine(34) in tRNA = 7-aminomethyl-7-carbaguanosine(34) in tRNA + guanine. The protein operates within tRNA modification; tRNA-queuosine biosynthesis. Catalyzes the base-exchange of a guanine (G) residue with the queuine precursor 7-aminomethyl-7-deazaguanine (PreQ1) at position 34 (anticodon wobble position) in tRNAs with GU(N) anticodons (tRNA-Asp, -Asn, -His and -Tyr). Catalysis occurs through a double-displacement mechanism. The nucleophile active site attacks the C1' of nucleotide 34 to detach the guanine base from the RNA, forming a covalent enzyme-RNA intermediate. The proton acceptor active site deprotonates the incoming PreQ1, allowing a nucleophilic attack on the C1' of the ribose to form the product. After dissociation, two additional enzymatic reactions on the tRNA convert PreQ1 to queuine (Q), resulting in the hypermodified nucleoside queuosine (7-(((4,5-cis-dihydroxy-2-cyclopenten-1-yl)amino)methyl)-7-deazaguanosine). This Streptococcus equi subsp. zooepidemicus (strain H70) protein is Queuine tRNA-ribosyltransferase.